We begin with the raw amino-acid sequence, 344 residues long: Arylacetonitrilase (344 aa).

A CN hydrolase domain is found at 5–290 (LRVAVTQAEP…EGIVYADLDL (286 aa)). The active-site Proton acceptor is Glu-45. The active site involves Lys-126. Cys-167 serves as the catalytic Nucleophile. Positions 324–344 (VIPRDEEEPSRKANVVVPKQE) are disordered.

Belongs to the carbon-nitrogen hydrolase superfamily. Nitrilase family.

It carries out the reaction a nitrile + 2 H2O = a carboxylate + NH4(+). The enzyme catalyses 4-chlorophenylacetonitrile + 2 H2O = 4-chlorophenylacetate + NH4(+). In terms of biological role, nitrilase that hydrolyzes preferentially phenylacetonitrile and (R,S)-mandelonitrile. Also acts on dinitriles like phenylenediacetonitriles (PDAs) 1,2-PDA, 1,3-PDA, and 1,4-PDA, and cyanophenyl acetonitriles (CPAs) 2-CPA and 4-CPA. This is Arylacetonitrilase from Macrophomina phaseolina (strain MS6) (Charcoal rot fungus).